A 742-amino-acid chain; its full sequence is Photosystem I P700 chlorophyll a apoprotein A2 2 (742 aa).

8 helical membrane-spanning segments follow: residues 46 to 69 (IFAT…FHVA), 135 to 158 (LYQG…LHLQ), 175 to 199 (LNHH…HVAI), 273 to 291 (MAHH…GHMY), 334 to 357 (LHFQ…QHMY), 373 to 399 (AALY…IFWI), 421 to 443 (AIIS…IYVH), and 524 to 542 (FLVH…LICV). [4Fe-4S] cluster-binding residues include C566 and C575. 2 helical membrane passes run 583–604 (SFYL…YWHW) and 651–673 (LSVW…MFLI). The chlorophyll a site is built by H662, M670, and Y678. Phylloquinone is bound at residue W679. A helical transmembrane segment spans residues 715 to 735 (LVGLAHFTVGYILTYAAFLIA).

The protein belongs to the PsaA/PsaB family. The PsaA/B heterodimer binds the P700 chlorophyll special pair and subsequent electron acceptors. PSI consists of a core antenna complex that captures photons, and an electron transfer chain that converts photonic excitation into a charge separation. The cyanobacterial PSI reaction center is composed of one copy each of PsaA,B,C,D,E,F,I,J,K,L,M and X, and forms trimeric complexes. Requires PSI electron transfer chain: 5 chlorophyll a, 1 chlorophyll a', 2 phylloquinones and 3 4Fe-4S clusters. PSI core antenna: 90 chlorophyll a, 22 carotenoids, 3 phospholipids and 1 galactolipid. P700 is a chlorophyll a/chlorophyll a' dimer, A0 is one or more chlorophyll a, A1 is one or both phylloquinones and FX is a shared 4Fe-4S iron-sulfur center. as cofactor.

The protein resides in the cellular thylakoid membrane. It carries out the reaction reduced [plastocyanin] + hnu + oxidized [2Fe-2S]-[ferredoxin] = oxidized [plastocyanin] + reduced [2Fe-2S]-[ferredoxin]. PsaA and PsaB bind P700, the primary electron donor of photosystem I (PSI), as well as the electron acceptors A0, A1 and FX. PSI is a plastocyanin/cytochrome c6-ferredoxin oxidoreductase, converting photonic excitation into a charge separation, which transfers an electron from the donor P700 chlorophyll pair to the spectroscopically characterized acceptors A0, A1, FX, FA and FB in turn. Oxidized P700 is reduced on the lumenal side of the thylakoid membrane by plastocyanin or cytochrome c6. This Nostoc sp. (strain PCC 7120 / SAG 25.82 / UTEX 2576) protein is Photosystem I P700 chlorophyll a apoprotein A2 2 (psaB2).